Reading from the N-terminus, the 587-residue chain is MWPRNDVHMDDGSMTPEDQEPVTDNDMEYNDNGEESSYSNGSSSSYNADKLSSSRPLQHKLDLSASPSRNNDLNPRVEHLIALFKDLSSAEQMDAFTRLLQESNMTNIRQLRAIIEPHFQRDFLSCLPVELGMKILHNLTGYDLLKVAQVSKNWKLISEIDKIWKSLGVEEFKHHPDPTDRVTGAWQGTAIAAGVTIPDHIQPCDLNVHRFLKLQKFGDIFERAADKSRYLRADKIEKNWNANPIMGSAVLRGHEDHVITCMQIHDDVLVTGSDDNTLKVWCIDKGEVMYTLVGHTGGVWTSQISQCGRYIVSGSTDRTVKVWSTVDGSLLHTLQGHTSTVRCMAMAGSILVTGSRDTTLRVWDVESGRHLATLHGHHAAVRCVQFDGTTVVSGGYDFTVKIWNAHTGRCIRTLTGHNNRVYSLLFESERSIVCSGSLDTSIRVWDFTRPEGQECVALLQGHTSLTSGMQLRGNILVSCNADSHVRVWDIHEGTCVHMLSGHRSAITSLQWFGRNMVATSSDDGTVKLWDIERGALIRDLVTLDSGGNGGCIWRLCSTSTMLACAVGSRNNTEETKVILLDFDAVYP.

Residues 1–11 show a composition bias toward basic and acidic residues; it reads MWPRNDVHMDD. A disordered region spans residues 1–53; that stretch reads MWPRNDVHMDDGSMTPEDQEPVTDNDMEYNDNGEESSYSNGSSSSYNADKLSS. The span at 17–34 shows a compositional bias: acidic residues; sequence EDQEPVTDNDMEYNDNGE. The span at 35 to 47 shows a compositional bias: low complexity; sequence ESSYSNGSSSSYN. An F-box domain is found at 121-167; sequence RDFLSCLPVELGMKILHNLTGYDLLKVAQVSKNWKLISEIDKIWKSL. WD repeat units follow at residues 253-291, 294-333, 336-373, 376-415, 416-455, 461-498, and 501-539; these read GHED…VMYT, GHTG…LLHT, GHTS…HLAT, GHHA…RTLT, GHNN…GQEC, GHTS…CVHM, and GHRS…LIRD.

Probable component of the SCF(sel-10) E3 ubiquitin-protein ligase complex which includes skr-1 and F-box domain-containing protein sel-10 as a substrate recognition component. Interacts with fem-1, fem-2, and fem-3. Interacts with the intracellular domain of glp-1 and sel-12. Interacts with lin-12. Interacts with skr-1. Interacts with zyg-1. Expressed in tail and head neurons.

It localises to the cell projection. Its subcellular location is the axon. It is found in the cytoplasm. Its function is as follows. Probable substrate recognition component of SCF (SKP1-CUL-F-box protein) E3 ubiquitin-protein ligase complex, which mediates the ubiquitination and subsequent proteasomal degradation of target proteins. Regulates synapse elimination in early development in the motor neuron HSNL. Cell autonomous negative regulator of lin-12/Notch-mediated signaling, with respect to lin-12 activity in cell fate decisions and tumorigenesis. May target the intracellular domains of lin-12/Notch proteins for ubiquitin-dependent degradation. Involved in sex determination by promoting female development. Potential regulator of presenilin. May have a role in egg laying. Regulates zyg-1 levels (possibly redundantly with lin-23) to control centrosome duplication during mitosis. Negatively regulates lin-45 activity and protein stability, probably by targeting it for ubiquitination and proteasomal degradation. The protein is F-box/WD repeat-containing protein sel-10 of Caenorhabditis elegans.